Reading from the N-terminus, the 866-residue chain is Speckle targeted PIP5K1A-regulated poly(A) polymerase (866 aa).

The segment at 16-46 (FRCCLCDVTTANRPSLDAHLKGRKHRDLVQL) adopts a Matrin-type zinc-finger fold. Residues 56-128 (RSVFVSGFPR…HTLRVRPREQ (73 aa)) form the RRM domain. The segment at 116–147 (LGGHTLRVRPREQKEFQSPASKSPKGVDSNSH) is disordered. Ser205 serves as a coordination point for ATP. The Mg(2+) site is built by Asp216 and Asp218. Residues Asp216 and Asp218 each contribute to the UTP site. Disordered stretches follow at residues 223 to 249 (LGDM…STLA) and 267 to 321 (LSPT…EGKH). Residues 282–304 (TPSSLAPQTPDSALGSDTVTSPQ) show a composition bias toward polar residues. ATP is bound at residue Asn393. Residues Asn393, Arg415, Tyr433, and His550 each contribute to the UTP site. In terms of domain architecture, PAP-associated spans 492–550 (LSSLLAQFFSCVSCWDLSGSLLSLREGQALMVAGGLPSDLWEGLRLGPMNLQDPFDLSH). The KA1; binds the bulging loops of U6 snRNA but is dispensable for terminal uridylyltransferase activity stretch occupies residues 599–866 (SSPSSLLSAK…IPQALKNLLK (268 aa)). 3 disordered regions span residues 638–687 (QGTK…DHSE), 728–755 (EQNP…PSSV), and 773–792 (RRRF…STGA). Over residues 669–687 (KSCEEGKEEPQGCAGDHSE) the composition is skewed to basic and acidic residues. Residues Ser686 and Ser741 each carry the phosphoserine modification.

It belongs to the DNA polymerase type-B-like family. In terms of assembly, associates with the cleavage and polyadenylation specificity factor (CPSF) complex. Interacts with CPSF1 and CPSF3; the interaction is direct. Interacts with PIP5K1A. Requires Mg(2+) as cofactor. Mn(2+) is required as a cofactor. Post-translationally, phosphorylated by CK1 in the proline-rich (Pro-rich) region.

The protein localises to the nucleus. Its subcellular location is the nucleolus. It is found in the nucleus speckle. It catalyses the reaction RNA(n) + UTP = RNA(n)-3'-uridine ribonucleotide + diphosphate. The catalysed reaction is RNA(n) + ATP = RNA(n)-3'-adenine ribonucleotide + diphosphate. Adenylyltransferase activity is specifically phosphatidylinositol 4,5-bisphosphate (PtdIns(4,5)P2). In terms of biological role, poly(A) polymerase that creates the 3'-poly(A) tail of specific pre-mRNAs. Localizes to nuclear speckles together with PIP5K1A and mediates polyadenylation of a select set of mRNAs, such as HMOX1. In addition to polyadenylation, it is also required for the 3'-end cleavage of pre-mRNAs: binds to the 3'UTR of targeted pre-mRNAs and promotes the recruitment and assembly of the CPSF complex on the 3'UTR of pre-mRNAs. In addition to adenylyltransferase activity, also has uridylyltransferase activity. However, the ATP ratio is higher than UTP in cells, suggesting that it functions primarily as a poly(A) polymerase. Acts as a specific terminal uridylyltransferase for U6 snRNA in vitro: responsible for a controlled elongation reaction that results in the restoration of the four 3'-terminal UMP-residues found in newly transcribed U6 snRNA. Not involved in replication-dependent histone mRNA degradation. This is Speckle targeted PIP5K1A-regulated poly(A) polymerase (Tut1) from Rattus norvegicus (Rat).